The chain runs to 94 residues: Co-chaperonin GroES (94 aa).

The protein belongs to the GroES chaperonin family. In terms of assembly, heptamer of 7 subunits arranged in a ring. Interacts with the chaperonin GroEL.

It is found in the cytoplasm. In terms of biological role, together with the chaperonin GroEL, plays an essential role in assisting protein folding. The GroEL-GroES system forms a nano-cage that allows encapsulation of the non-native substrate proteins and provides a physical environment optimized to promote and accelerate protein folding. GroES binds to the apical surface of the GroEL ring, thereby capping the opening of the GroEL channel. This Listeria monocytogenes serotype 4b (strain CLIP80459) protein is Co-chaperonin GroES.